We begin with the raw amino-acid sequence, 911 residues long: General transcription factor 3C polypeptide 2 (911 aa).

2 disordered regions span residues 24 to 187 (DSPG…RRRA) and 205 to 297 (ALPA…MAPN). Positions 35-46 (DVKTSSEMTSAE) are enriched in polar residues. Ser-63 is subject to Phosphoserine. A compositionally biased stretch (basic and acidic residues) spans 64–81 (PDQRRLPPEQESLSRLEQ). The span at 92-112 (SKPRASKPGRKRGGRTRKGPK) shows a compositional bias: basic residues. Positions 114 to 123 (PQQPNPPSAP) are enriched in pro residues. Phosphoserine occurs at positions 132, 165, 167, 220, and 260. Residues 253-262 (EAEDVEESEG) show a composition bias toward acidic residues. Over residues 263–277 (PSESSSEPEPVVPRS) the composition is skewed to low complexity. 6 WD repeats span residues 366–426 (PEDG…MNET), 427–483 (HPLS…AWEL), 484–535 (PGTP…IYKV), 536–603 (QCVA…SLKL), 604–654 (YPFQ…NSIK), and 655–690 (RFLS…HYID). Ser-597 carries the phosphoserine modification. The interval 765–785 (SPEGPDHSSASSGVPNPPKAR) is disordered. Phosphoserine is present on residues Ser-871, Ser-892, and Ser-893. Residues 889 to 911 (FQPSSPTRRPGFSPTSHRLLPTP) are disordered. Thr-895 carries the post-translational modification Phosphothreonine. Phosphoserine is present on Ser-901.

Part of the TFIIIC subcomplex TFIIIC2, consisting of six subunits, GTF3C1, GTF3C2, GTF3C3, GTF3C4, GTF3C5 and GTF3C6.

It is found in the nucleus. Functionally, required for RNA polymerase III-mediated transcription. Component of TFIIIC that initiates transcription complex assembly on tRNA and is required for transcription of 5S rRNA and other stable nuclear and cytoplasmic RNAs. May play a direct role in stabilizing interactions of TFIIIC2 with TFIIIC1. In Homo sapiens (Human), this protein is General transcription factor 3C polypeptide 2 (GTF3C2).